Here is a 141-residue protein sequence, read N- to C-terminus: Large ribosomal subunit protein uL11 (141 aa).

Belongs to the universal ribosomal protein uL11 family. As to quaternary structure, part of the ribosomal stalk of the 50S ribosomal subunit. Interacts with L10 and the large rRNA to form the base of the stalk. L10 forms an elongated spine to which L12 dimers bind in a sequential fashion forming a multimeric L10(L12)X complex. One or more lysine residues are methylated.

Forms part of the ribosomal stalk which helps the ribosome interact with GTP-bound translation factors. In Methylacidiphilum infernorum (isolate V4) (Methylokorus infernorum (strain V4)), this protein is Large ribosomal subunit protein uL11.